A 670-amino-acid polypeptide reads, in one-letter code: DUF724 domain-containing protein 1 (670 aa).

Disordered stretches follow at residues 283-315 (HNGP…PMTP) and 368-445 (ANAE…NNDD). 3 stretches are compositionally biased toward polar residues: residues 294-309 (SPSN…SSSG), 379-392 (RNQN…TQQM), and 426-442 (CNGS…SICN). Residues 484–669 (PFAKKLPFWK…LEFQTTVSTP (186 aa)) form the DUF724 domain.

As to expression, expressed in stems and flowers.

The protein resides in the nucleus. In terms of biological role, may be involved in the polar growth of plant cells via transportation of RNAs. This is DUF724 domain-containing protein 1 from Arabidopsis thaliana (Mouse-ear cress).